We begin with the raw amino-acid sequence, 674 residues long: Pannexin-2 (674 aa).

Residues 11–53 lie on the Cytoplasmic side of the membrane; it reads MATALLAGEKLRELILPGSQDDKAGALAALLLQLKLELPFDRV. The helical transmembrane segment at 54–74 threads the bilayer; sequence VTIGTVLVPILLVTLVFTKNF. The Extracellular portion of the chain corresponds to 75-125; it reads AEEPIYCYTPHNFTRDQALYARGYCWTELRDALPGVDASLWPSLFEHKFLP. An N-linked (GlcNAc...) asparagine glycan is attached at Asn86. Residues 126 to 146 traverse the membrane as a helical segment; sequence YALLAFAAIMYVPALGWEFLA. Residues 147–230 are Cytoplasmic-facing; the sequence is STRLTSELNF…NFLAKLYLAR (84 aa). The chain crosses the membrane as a helical span at residues 231–251; sequence HVLILLLSVVPISYLCTYYAT. At 252–295 the chain is on the extracellular side; the sequence is QKQNEFTCALGASPDGPVGSAGPTVRVSCKLPSVQLQRIIAGVD. A helical membrane pass occupies residues 296–316; that stretch reads IVLLCFMNLIILVNLIHLFIF. Over 317 to 674 the chain is Cytoplasmic; it reads RKSNFIFDKL…PRTVVSTVEF (358 aa). Residues 394–408 are compositionally biased toward polar residues; the sequence is TTPTVRDSGIQTVDP. Disordered regions lie at residues 394-426 and 485-510; these read TTPT…VVKR and AHHY…KKHT. Ser590 and Ser601 each carry phosphoserine.

The protein belongs to the pannexin family. In terms of assembly, forms PANX1/PANX2-heteromeric intercellular channels on coexpression in paired Xenopus oocytes. Does not form homomeric channels. Post-translationally, S-palmitoylated in neural stem and progenitor cells. In terms of processing, cleaved by CASP3 and CASP7 during apoptosis. Cleavage has no effect on it function. Expressed in the eye, thyroid, prostate, kidney and liver. Abundantly expressed in the CNS, including hippocampus, olfactory bulb, cortex, cerebellum. Not detected in the white matter.

The protein resides in the cell membrane. The protein localises to the golgi apparatus membrane. Its subcellular location is the endoplasmic reticulum membrane. In terms of biological role, structural component of the gap junctions and the hemichannels. In Rattus norvegicus (Rat), this protein is Pannexin-2 (Panx2).